The chain runs to 349 residues: DNA polymerase IV (349 aa).

A UmuC domain is found at 7–188 (IIHIDMDYFF…LPVKKLFGVG (182 aa)). Residues Asp-11 and Asp-106 each coordinate Mg(2+). Glu-107 is a catalytic residue.

This sequence belongs to the DNA polymerase type-Y family. Monomer. Mg(2+) is required as a cofactor.

It localises to the cytoplasm. It catalyses the reaction DNA(n) + a 2'-deoxyribonucleoside 5'-triphosphate = DNA(n+1) + diphosphate. Its function is as follows. Poorly processive, error-prone DNA polymerase involved in untargeted mutagenesis. Copies undamaged DNA at stalled replication forks, which arise in vivo from mismatched or misaligned primer ends. These misaligned primers can be extended by PolIV. Exhibits no 3'-5' exonuclease (proofreading) activity. May be involved in translesional synthesis, in conjunction with the beta clamp from PolIII. This is DNA polymerase IV from Francisella tularensis subsp. holarctica (strain FTNF002-00 / FTA).